The primary structure comprises 201 residues: NADH-ubiquinone oxidoreductase chain 6 (201 aa).

Helical transmembrane passes span 4 to 24, 28 to 48, 55 to 75, 88 to 108, and 151 to 171; these read LVLF…VISV, VFSV…LLLL, LLFL…VVMI, FYYA…IFII, and LFIL…ILTL.

Belongs to the complex I subunit 6 family.

Its subcellular location is the mitochondrion membrane. It catalyses the reaction a ubiquinone + NADH + 5 H(+)(in) = a ubiquinol + NAD(+) + 4 H(+)(out). Functionally, core subunit of the mitochondrial membrane respiratory chain NADH dehydrogenase (Complex I) that is believed to belong to the minimal assembly required for catalysis. Complex I functions in the transfer of electrons from NADH to the respiratory chain. The immediate electron acceptor for the enzyme is believed to be ubiquinone. The polypeptide is NADH-ubiquinone oxidoreductase chain 6 (ND6) (Cyanidium caldarium (Red alga)).